The sequence spans 200 residues: Cleavage and polyadenylation specificity factor subunit 5 (200 aa).

The Nudix hydrolase domain occupies 45 to 170 (LRKAVEGIII…LSLIAVSLYE (126 aa)). The interval 70–72 (NYF) is interaction with RNA. The short motif at 77 to 98 (GKLKPGENEIDGLIRKLTKKLS) is the Nudix box element.

Belongs to the Nudix hydrolase family. CPSF5 subfamily. As to quaternary structure, homodimer (via N- and C-terminus); binds RNA as homodimer. Component of the cleavage factor Im (CFIm) complex.

It is found in the nucleus. It localises to the cytoplasm. In terms of biological role, component of the cleavage factor Im (CFIm) complex that functions as an activator of the pre-mRNA 3'-end cleavage and polyadenylation processing required for the maturation of pre-mRNA into functional mRNAs. CFIm contributes to the recruitment of multiprotein complexes on specific sequences on the pre-mRNA 3'-end, so called cleavage and polyadenylation signals (pA signals). Most pre-mRNAs contain multiple pA signals, resulting in alternative cleavage and polyadenylation (APA) producing mRNAs with variable 3'-end formation. The CFIm complex acts as a key regulator of cleavage and polyadenylation site choice during APA through its binding to 5'-UGUA-3' elements localized in the 3'-untranslated region (UTR) for a huge number of pre-mRNAs. Binds to 5'-UGUA-3' elements localized upstream of pA signals that act as enhancers of pre-mRNA 3'-end processing. The homodimer mediates simultaneous sequence-specific recognition of two 5'-UGUA-3' elements within the pre-mRNA. Plays a role in somatic cell fate transitions and pluripotency by regulating widespread changes in gene expression through an APA-dependent function. Binds to chromatin. The sequence is that of Cleavage and polyadenylation specificity factor subunit 5 from Dictyostelium discoideum (Social amoeba).